The chain runs to 187 residues: Mast cell-expressed membrane protein 1 (187 aa).

Residues 1–85 (MEVEEIYKHQ…PCWLYRAILS (85 aa)) lie on the Cytoplasmic side of the membrane. The interval 49-71 (DHAKGGHSRPTSQVPAQCRPPSD) is disordered. Residues 86-106 (LYILLALAFVLCIILSAFIMV) form a helical; Signal-anchor for type II membrane protein membrane-spanning segment. Residues 107–187 (KNAEMSKELL…LQKMPQSSPQ (81 aa)) are Extracellular-facing. N-linked (GlcNAc...) asparagine glycosylation is present at Asn-124.

Expressed specifically in mast cells. Found primarily in lung.

It localises to the membrane. This chain is Mast cell-expressed membrane protein 1, found in Homo sapiens (Human).